The primary structure comprises 60 residues: DNA-binding protein 7c (60 aa).

The interval 37–60 (DNGKTGRGAVSEKDAPKELLEKLK) is disordered. The span at 46-60 (VSEKDAPKELLEKLK) shows a compositional bias: basic and acidic residues.

The protein belongs to the 7 kDa DNA-binding/endoribonuclease P2 family. In terms of assembly, monomer.

It is found in the cytoplasm. Functionally, can constrain negative DNA supercoils. May be involved in maintaining the integrity of the genome at high temperature. The protein is DNA-binding protein 7c of Acidianus hospitalis (strain W1).